Reading from the N-terminus, the 100-residue chain is Co-chaperonin GroES (100 aa).

Belongs to the GroES chaperonin family. In terms of assembly, heptamer of 7 subunits arranged in a ring. Interacts with the chaperonin GroEL.

It localises to the cytoplasm. In terms of biological role, together with the chaperonin GroEL, plays an essential role in assisting protein folding. The GroEL-GroES system forms a nano-cage that allows encapsulation of the non-native substrate proteins and provides a physical environment optimized to promote and accelerate protein folding. GroES binds to the apical surface of the GroEL ring, thereby capping the opening of the GroEL channel. This Mycobacterium tuberculosis (strain CDC 1551 / Oshkosh) protein is Co-chaperonin GroES.